A 350-amino-acid polypeptide reads, in one-letter code: Chlorophyll a/b light-harvesting protein PcbA (350 aa).

6 helical membrane-spanning segments follow: residues 26–46, 62–82, 87–107, 214–234, 248–268, and 309–329; these read LSAH…ITLF, LILI…GQVV, YFVI…GALY, IAVV…FPWA, LSAS…FSAV, and LCNV…WHAL.

The protein belongs to the PsbB/PsbC family. IsiA/Pcb subfamily. As to quaternary structure, the antenna complex consists of chlorophylls (a and b) and chlorophyll a/b binding proteins. Requires chlorophyll a as cofactor. The cofactor is chlorophyll b.

It is found in the cellular thylakoid membrane. The antenna complex functions as a light receptor, it captures and delivers excitation energy to photosystems II and I. The Prochlorales pcb genes are not related to higher plant LHCs. This chain is Chlorophyll a/b light-harvesting protein PcbA (pcbA), found in Prochlorothrix hollandica.